The sequence spans 309 residues: MSIRIVPQEQLEQNEQSTREGHIPPLLFANLKSLYSSRAERLRQLAEDHPLGDYLTFAAGVVEAQQKVLHDHPLHLDLSDVLKQSGERPPLDIAVFPRDAHWHTLLRALIEELKPDASGQVLSTLENLEKASEQELEEQATALLQHEFRAENNDKAPFIWAALSLFWAQMAGLLPGKARAVPGEHRQFCPVCGSIPVSGVVQLGTSSGLRYLHCNLCESEWHMVRVKCSNCEESSELNYWSLDSENSAIKAESCGHCGTYVKLLYQEKDHRVEAVADDLASLVLDVKMEEEGFSRSSINPFLFPESSIE.

It belongs to the FdhE family.

It localises to the cytoplasm. Functionally, necessary for formate dehydrogenase activity. This Pectobacterium atrosepticum (strain SCRI 1043 / ATCC BAA-672) (Erwinia carotovora subsp. atroseptica) protein is Protein FdhE homolog.